The sequence spans 358 residues: Peptide chain release factor 1 (358 aa).

Gln-237 carries the N5-methylglutamine modification.

The protein belongs to the prokaryotic/mitochondrial release factor family. Post-translationally, methylated by PrmC. Methylation increases the termination efficiency of RF1.

It localises to the cytoplasm. Functionally, peptide chain release factor 1 directs the termination of translation in response to the peptide chain termination codons UAG and UAA. The protein is Peptide chain release factor 1 of Streptomyces coelicolor (strain ATCC BAA-471 / A3(2) / M145).